Here is a 325-residue protein sequence, read N- to C-terminus: MADKQRKKVILVGDGAVGSSYAFALVNQGIAQELGIVDLFKEKTQGDAEDLSHALAFTSPKKIYSADYSDASDADLVVLTSGAPQKPGETRLDLVEKNLRITKDVVTKIVASGFKGIFLVAANPVDILTYATWKFSGFPKNRVVGSGTSLDTARFRQALAEKVDVDARSIHAYIMGEHGDSEFAVWSHANVAGVKLEQWFQENDYLNEAEIVKLFESVRDAAYSIIAKKGATFYGVAVALARITKAILDDEHAVLPVSVFQDGQYGVSDCYLGQPAVVGAEGVVNPIHIPLNDAEMQKMEASGAQLKAIIDEAFAKEEFASAVKN.

NAD(+)-binding positions include Val-17, Asp-38, Lys-43, Tyr-68, and 82–83; that span reads GA. Residues Gln-85, Arg-91, and 123-126 each bind substrate; that span reads NPVD. Residues 121–123 and Ser-146 each bind NAD(+); that span reads AAN. 151–154 serves as a coordination point for substrate; the sequence is DTAR. Residues Arg-156 and His-171 each contribute to the beta-D-fructose 1,6-bisphosphate site. The active-site Proton acceptor is His-178. The residue at position 223 (Tyr-223) is a Phosphotyrosine. Thr-232 provides a ligand contact to substrate.

Belongs to the LDH/MDH superfamily. LDH family. In terms of assembly, homotetramer.

The protein resides in the cytoplasm. The enzyme catalyses (S)-lactate + NAD(+) = pyruvate + NADH + H(+). It participates in fermentation; pyruvate fermentation to lactate; (S)-lactate from pyruvate: step 1/1. With respect to regulation, allosterically activated by fructose 1,6-bisphosphate (FBP). Catalyzes the conversion of lactate to pyruvate. The protein is L-lactate dehydrogenase 1 of Lactococcus lactis subsp. cremoris (Streptococcus cremoris).